Consider the following 474-residue polypeptide: E3 ubiquitin-protein ligase rnf168 (474 aa).

The segment covering 1 to 12 (MPPVSEVDRGPV) has biased composition (basic and acidic residues). A disordered region spans residues 1 to 20 (MPPVSEVDRGPVEESSGGLK). An RING-type zinc finger spans residues 26 to 65 (CPVCLEIFLEPVTLPCMHTFCKPCFLETVDKSNMCCPLCR). The short motif at 119-137 (VCQPGELRKEYEDQISKLV) is the LR motif 1 element. The UMI motif signature appears at 152 to 160 (EEYIQRLLA). The MIU motif 1 motif lies at 174-195 (EEQQLENDEKLARLLSLELNSG). The span at 192 to 203 (LNSGPASESTCN) shows a compositional bias: polar residues. Disordered stretches follow at residues 192-259 (LNSG…KPLS) and 367-474 (IQKE…NMGS). Positions 233–243 (PSSSDSSPDSS) are enriched in low complexity. The short motif at 353 to 376 (RWQQEEEDRRLALRIQKELDRENS) is the MIU motif 2 element. The span at 367–383 (IQKELDRENSVDRRKGS) shows a compositional bias: basic and acidic residues. The LR motif 2 motif lies at 379-390 (RRKGSADSYQLR). Polar residues-rich tracts occupy residues 385 to 402 (DSYQ…TTSP) and 409 to 418 (KGSNTTTAKN). A compositionally biased stretch (basic and acidic residues) spans 422–432 (RRGEEKTEKRL). Residues 443-457 (VKTPVSSTAVSSTVK) show a composition bias toward low complexity.

This sequence belongs to the RNF168 family. In terms of assembly, monomer.

It is found in the nucleus. It carries out the reaction S-ubiquitinyl-[E2 ubiquitin-conjugating enzyme]-L-cysteine + [acceptor protein]-L-lysine = [E2 ubiquitin-conjugating enzyme]-L-cysteine + N(6)-ubiquitinyl-[acceptor protein]-L-lysine.. It participates in protein modification; protein ubiquitination. Functionally, E3 ubiquitin-protein ligase required for accumulation of repair proteins to sites of DNA damage. Acts with ube2n/ubc13 to amplify the rnf8-dependent histone ubiquitination. Recruited to sites of DNA damage at double-strand breaks (DSBs) by binding to ubiquitinated histone H2A and ubiquitinates histone H2A and H2AX, leading to amplify the rnf8-dependent H2A ubiquitination and promoting the formation of 'Lys-63'-linked ubiquitin conjugates. This leads to concentrate ubiquitinated histones H2A and H2AX at DNA lesions. Catalyzes monoubiquitination of 'Lys-13' and 'Lys-15' of nucleosomal histone H2A (H2AK13Ub and H2AK15Ub, respectively). This chain is E3 ubiquitin-protein ligase rnf168, found in Danio rerio (Zebrafish).